Consider the following 318-residue polypeptide: Acetyl-coenzyme A carboxylase carboxyl transferase subunit alpha (318 aa).

In terms of domain architecture, CoA carboxyltransferase C-terminal spans 39–292 (LSDKAERQLR…GAAIAETLPG (254 aa)).

It belongs to the AccA family. Acetyl-CoA carboxylase is a heterohexamer composed of biotin carboxyl carrier protein (AccB), biotin carboxylase (AccC) and two subunits each of ACCase subunit alpha (AccA) and ACCase subunit beta (AccD).

The protein localises to the cytoplasm. The enzyme catalyses N(6)-carboxybiotinyl-L-lysyl-[protein] + acetyl-CoA = N(6)-biotinyl-L-lysyl-[protein] + malonyl-CoA. Its pathway is lipid metabolism; malonyl-CoA biosynthesis; malonyl-CoA from acetyl-CoA: step 1/1. Component of the acetyl coenzyme A carboxylase (ACC) complex. First, biotin carboxylase catalyzes the carboxylation of biotin on its carrier protein (BCCP) and then the CO(2) group is transferred by the carboxyltransferase to acetyl-CoA to form malonyl-CoA. The sequence is that of Acetyl-coenzyme A carboxylase carboxyl transferase subunit alpha from Acidiphilium cryptum (strain JF-5).